A 254-amino-acid chain; its full sequence is PAXIP1-associated glutamate-rich protein 1 (254 aa).

2 disordered regions span residues 1-111 (MSLA…PPSE) and 127-254 (LQAE…QRKY). Over residues 45 to 62 (KAEDEGEGGREETEREGS) the composition is skewed to basic and acidic residues. The segment covering 78-98 (EPAEEDSEDWCVPCSDEEVEL) has biased composition (acidic residues). A sufficient for interaction with NCOA1 region spans residues 116–160 (YELLAAHGTLELQAEILPRRPPTPEAQSEEERSDEEPEAKEEEEE). Thr138 carries the phosphothreonine modification. The segment covering 142-159 (QSEEERSDEEPEAKEEEE) has biased composition (acidic residues). Phosphoserine is present on residues Ser143 and Ser148. Residues 161-254 (KPHMPTEFDF…SSLFPRQRKY (94 aa)) form a sufficient for interaction with ESR1 region. A compositionally biased stretch (basic and acidic residues) spans 195-223 (QKREARLDKVLSDMKRHKKLEEQILRTGR). At Ser237 the chain carries Phosphoserine.

In terms of assembly, component of the KMT2 family MLL2/MLL3 complex (also named ASCOM complex), at least composed of the HMTs KMT2D and/or KMT2C, the common subunits ASH2L, RBBP5, WDR5 and DPY30, and the complex type-specific subunits PAXIP1/PTIP, PAGR1, NCOA6 and KDM6A; PAXIP1 is required for the association with the MLL2/MLL3 complex. Forms a constitutive complex with PAXIP1/PTIP independently of the MLL2/MLL3 complex. Interacts with NCOA1, ESR1, NR3C1, AR. Ubiquitously expressed.

It localises to the nucleus. Its function is as follows. Its association with the histone methyltransferase MLL2/MLL3 complex is suggesting a role in epigenetic transcriptional activation. However, in association with PAXIP1/PTIP is proposed to function at least in part independently of the MLL2/MLL3 complex. Proposed to be recruited by PAXIP1 to sites of DNA damage where the PAGR1:PAXIP1 complex is required for cell survival in response to DNA damage independently of the MLL2/MLL3 complex. However, its function in DNA damage has been questioned. During immunoglobulin class switching in activated B-cells is involved in transcription regulation of downstream switch regions at the immunoglobulin heavy-chain (Igh) locus independently of the MLL2/MLL3 complex. Involved in both estrogen receptor-regulated gene transcription and estrogen-stimulated G1/S cell-cycle transition. Acts as a transcriptional cofactor for nuclear hormone receptors. Inhibits the induction properties of several steroid receptors such as NR3C1, AR and PPARG; the mechanism of inhibition appears to be gene-dependent. The protein is PAXIP1-associated glutamate-rich protein 1 (PAGR1) of Homo sapiens (Human).